Consider the following 166-residue polypeptide: Putative tRNA (cytidine(34)-2'-O)-methyltransferase (166 aa).

Residues Leu83, Gly109, Ile130, and Ser138 each contribute to the S-adenosyl-L-methionine site.

Belongs to the class IV-like SAM-binding methyltransferase superfamily. RNA methyltransferase TrmH family. TrmL subfamily.

Its subcellular location is the cytoplasm. It catalyses the reaction cytidine(34) in tRNA + S-adenosyl-L-methionine = 2'-O-methylcytidine(34) in tRNA + S-adenosyl-L-homocysteine + H(+). It carries out the reaction 5-carboxymethylaminomethyluridine(34) in tRNA(Leu) + S-adenosyl-L-methionine = 5-carboxymethylaminomethyl-2'-O-methyluridine(34) in tRNA(Leu) + S-adenosyl-L-homocysteine + H(+). Its function is as follows. Could methylate the ribose at the nucleotide 34 wobble position in tRNA. The polypeptide is Putative tRNA (cytidine(34)-2'-O)-methyltransferase (Mycoplasma genitalium (strain ATCC 33530 / DSM 19775 / NCTC 10195 / G37) (Mycoplasmoides genitalium)).